The primary structure comprises 352 residues: Protein-glutamate methylesterase/protein-glutamine glutaminase 2 (352 aa).

The region spanning 1-116 (MVVDDSAVVR…KQFLTDSADE (116 aa)) is the Response regulatory domain. Residue Asp50 is modified to 4-aspartylphosphate. Residues 162-352 (AQTTERIVAI…MAREIVTQLQ (191 aa)) form the CheB-type methylesterase domain. Active-site residues include Ser174, His200, and Asp296.

It belongs to the CheB family. In terms of processing, phosphorylated by CheA. Phosphorylation of the N-terminal regulatory domain activates the methylesterase activity.

It localises to the cytoplasm. The enzyme catalyses [protein]-L-glutamate 5-O-methyl ester + H2O = L-glutamyl-[protein] + methanol + H(+). It carries out the reaction L-glutaminyl-[protein] + H2O = L-glutamyl-[protein] + NH4(+). Its function is as follows. Involved in chemotaxis. Part of a chemotaxis signal transduction system that modulates chemotaxis in response to various stimuli. Catalyzes the demethylation of specific methylglutamate residues introduced into the chemoreceptors (methyl-accepting chemotaxis proteins or MCP) by CheR. Also mediates the irreversible deamidation of specific glutamine residues to glutamic acid. The sequence is that of Protein-glutamate methylesterase/protein-glutamine glutaminase 2 from Xanthomonas campestris pv. campestris (strain ATCC 33913 / DSM 3586 / NCPPB 528 / LMG 568 / P 25).